Here is a 274-residue protein sequence, read N- to C-terminus: 2,3,4,5-tetrahydropyridine-2,6-dicarboxylate N-succinyltransferase (274 aa).

Arg104 and Asp141 together coordinate substrate.

The protein belongs to the transferase hexapeptide repeat family. Homotrimer.

It is found in the cytoplasm. It catalyses the reaction (S)-2,3,4,5-tetrahydrodipicolinate + succinyl-CoA + H2O = (S)-2-succinylamino-6-oxoheptanedioate + CoA. It participates in amino-acid biosynthesis; L-lysine biosynthesis via DAP pathway; LL-2,6-diaminopimelate from (S)-tetrahydrodipicolinate (succinylase route): step 1/3. This Edwardsiella ictaluri (strain 93-146) protein is 2,3,4,5-tetrahydropyridine-2,6-dicarboxylate N-succinyltransferase.